The chain runs to 115 residues: Large ribosomal subunit protein bL19 (115 aa).

This sequence belongs to the bacterial ribosomal protein bL19 family.

Functionally, this protein is located at the 30S-50S ribosomal subunit interface and may play a role in the structure and function of the aminoacyl-tRNA binding site. In Escherichia coli O139:H28 (strain E24377A / ETEC), this protein is Large ribosomal subunit protein bL19.